A 296-amino-acid chain; its full sequence is uncharacterized protein (296 aa).

6 helical membrane-spanning segments follow: residues 1-21 (MVNL…IFDY), 30-50 (LITA…GFWL), 71-91 (FISF…FVLC), 92-112 (LAQL…STLA), 113-133 (IGLA…LVLF), and 142-162 (IEVA…TTIC).

It belongs to the MscS (TC 1.A.23) family.

The protein resides in the cell membrane. This is an uncharacterized protein from Synechocystis sp. (strain ATCC 27184 / PCC 6803 / Kazusa).